Here is a 332-residue protein sequence, read N- to C-terminus: Large ribosomal subunit protein mL44 (332 aa).

The N-terminal 30 residues, 1–30 (MASGLVRLLQQGHRCLLAPVAPKLVPPVRG), are a transit peptide targeting the mitochondrion. The 143-residue stretch at 86–228 (DLLKTAFVNS…LITQMTGKEL (143 aa)) folds into the RNase III domain. The region spanning 236–306 (NPMGLLVEEL…ARVALRKLYG (71 aa)) is the DRBM domain.

Belongs to the ribonuclease III family. Mitochondrion-specific ribosomal protein mL44 subfamily. In terms of assembly, component of the mitochondrial large ribosomal subunit (mt-LSU). Mature mammalian 55S mitochondrial ribosomes consist of a small (28S) and a large (39S) subunit. The 28S small subunit contains a 12S ribosomal RNA (12S mt-rRNA) and 30 different proteins. The 39S large subunit contains a 16S rRNA (16S mt-rRNA), a copy of mitochondrial valine transfer RNA (mt-tRNA(Val)), which plays an integral structural role, and 52 different proteins.

The protein localises to the mitochondrion. Its function is as follows. Component of the 39S subunit of mitochondrial ribosome. May have a function in the assembly/stability of nascent mitochondrial polypeptides exiting the ribosome. In Homo sapiens (Human), this protein is Large ribosomal subunit protein mL44 (MRPL44).